Reading from the N-terminus, the 299-residue chain is Endonuclease G, mitochondrial (299 aa).

The N-terminal 48 residues, 1–48, are a transit peptide targeting the mitochondrion; the sequence is MQLLRAGLTLALGAGLGAAAESWWRQRADARATPGLLSRLPVLPVAAA. The residue at position 130 (T130) is a Phosphothreonine. The Proton acceptor role is filled by H143. N174 is a Mg(2+) binding site. An essential for deoxyribonuclease activity region spans residues 288–298; sequence AGSLKAITAGS. S290 is subject to Phosphoserine.

This sequence belongs to the DNA/RNA non-specific endonuclease family. In terms of assembly, homodimer; disulfide-linked. Homodimerization is essential for its activity. Interacts with YWHAG. Requires Mg(2+) as cofactor. In terms of processing, GSK3-beta-mediated dual phosphorylations at Thr-130 and Ser-290 is necessary for its interaction with YWHAG and the induction of autophagy.

Its subcellular location is the mitochondrion. Functionally, endonuclease that preferentially catalyzes the cleavage of double-stranded 5-hydroxymethylcytosine (5hmC)-modified DNA. The 5hmC-modified nucleotide does not increase the binding affinity, but instead increases the efficiency of cutting and specifies the site of cleavage for the modified DNAs. Shows significantly higher affinity for four- stranded Holliday junction over duplex and single-stranded DNAs. Promotes conservative recombination when the DNA is 5hmC-modified. Promotes autophagy through the suppression of mTOR by its phosphorylation-mediated interaction with YWHAG and its endonuclease activity-mediated DNA damage response. GSK3-beta mediated phosphorylation of ENDOG enhances its interaction with YWHAG, leading to the release of TSC2 and PIK3C3 from YWHAG resulting in mTOR pathway suppression and autophagy initiation. Promotes cleavage of mtDNA in response to oxidative and nitrosative stress, in turn inducing compensatory mtDNA replication. The polypeptide is Endonuclease G, mitochondrial (ENDOG) (Bos taurus (Bovine)).